The following is a 338-amino-acid chain: Fructose-1,6-bisphosphatase class 1 1 (338 aa).

Mg(2+) contacts are provided by glutamate 91, aspartate 113, leucine 115, and aspartate 116. Substrate contacts are provided by residues 116–119, asparagine 208, and lysine 274; that span reads DGSS. Glutamate 280 provides a ligand contact to Mg(2+).

It belongs to the FBPase class 1 family. In terms of assembly, homotetramer. It depends on Mg(2+) as a cofactor.

The protein localises to the cytoplasm. It carries out the reaction beta-D-fructose 1,6-bisphosphate + H2O = beta-D-fructose 6-phosphate + phosphate. Its pathway is carbohydrate biosynthesis; gluconeogenesis. The chain is Fructose-1,6-bisphosphatase class 1 1 from Cupriavidus necator (strain ATCC 17699 / DSM 428 / KCTC 22496 / NCIMB 10442 / H16 / Stanier 337) (Ralstonia eutropha).